We begin with the raw amino-acid sequence, 128 residues long: Sulfurtransferase TusD (128 aa).

Cysteine 78 (cysteine persulfide intermediate) is an active-site residue.

This sequence belongs to the DsrE/TusD family. Heterohexamer, formed by a dimer of trimers. The hexameric TusBCD complex contains 2 copies each of TusB, TusC and TusD. The TusBCD complex interacts with TusE.

The protein localises to the cytoplasm. Its function is as follows. Part of a sulfur-relay system required for 2-thiolation of 5-methylaminomethyl-2-thiouridine (mnm(5)s(2)U) at tRNA wobble positions. Accepts sulfur from TusA and transfers it in turn to TusE. The chain is Sulfurtransferase TusD from Escherichia coli O127:H6 (strain E2348/69 / EPEC).